Here is a 278-residue protein sequence, read N- to C-terminus: Mediator of RNA polymerase II transcription subunit 18 (278 aa).

The protein belongs to the Mediator complex subunit 18 family. As to quaternary structure, component of the Mediator complex.

The protein resides in the nucleus. Component of the Mediator complex, a coactivator involved in the regulated transcription of nearly all RNA polymerase II-dependent genes. Mediator functions as a bridge to convey information from gene-specific regulatory proteins to the basal RNA polymerase II transcription machinery. Mediator is recruited to promoters by direct interactions with regulatory proteins and serves as a scaffold for the assembly of a functional preinitiation complex with RNA polymerase II and the general transcription factors. This Aspergillus clavatus (strain ATCC 1007 / CBS 513.65 / DSM 816 / NCTC 3887 / NRRL 1 / QM 1276 / 107) protein is Mediator of RNA polymerase II transcription subunit 18 (srb5).